We begin with the raw amino-acid sequence, 644 residues long: Exoribonuclease 2 (644 aa).

One can recognise an RNB domain in the interval 189-516 (RQDLTALNFV…NHRLLKAVIK (328 aa)). Positions 561–643 (NTRFAAEIID…ETRSIIARPA (83 aa)) constitute an S1 motif domain.

The protein belongs to the RNR ribonuclease family. RNase II subfamily.

The protein localises to the cytoplasm. The enzyme catalyses Exonucleolytic cleavage in the 3'- to 5'-direction to yield nucleoside 5'-phosphates.. Involved in mRNA degradation. Hydrolyzes single-stranded polyribonucleotides processively in the 3' to 5' direction. The sequence is that of Exoribonuclease 2 from Salmonella paratyphi B (strain ATCC BAA-1250 / SPB7).